Reading from the N-terminus, the 505-residue chain is Lysine--tRNA ligase, heat inducible (505 aa).

N6-acetyllysine occurs at positions 114 and 156. 2 residues coordinate Mg(2+): Glu415 and Glu422.

The protein belongs to the class-II aminoacyl-tRNA synthetase family. As to quaternary structure, homodimer. It depends on Mg(2+) as a cofactor.

It localises to the cytoplasm. It catalyses the reaction tRNA(Lys) + L-lysine + ATP = L-lysyl-tRNA(Lys) + AMP + diphosphate. In Escherichia coli O6:H1 (strain CFT073 / ATCC 700928 / UPEC), this protein is Lysine--tRNA ligase, heat inducible (lysU).